The sequence spans 135 residues: CDGSH iron-sulfur domain-containing protein 2A (135 aa).

Residues 1 to 37 are Lumenal-facing; the sequence is MVLETISRIIKIQLPAYLKKLPLPETIGGFARLTVSE. The helical transmembrane segment at 38–60 threads the bilayer; that stretch reads WLRLLPLLGILALLGYLTIRPFL. Residues 61–135 are Cytoplasmic-facing; the sequence is PKKKKQKDSL…GPLILKKKIL (75 aa). [2Fe-2S] cluster-binding residues include Cys-99, Cys-101, Cys-110, and His-114.

This sequence belongs to the CISD protein family. CISD2 subfamily. In terms of assembly, homodimer. [2Fe-2S] cluster is required as a cofactor.

It is found in the endoplasmic reticulum membrane. The protein localises to the mitochondrion outer membrane. Its function is as follows. Regulator of autophagy that contributes to antagonize becn1-mediated cellular autophagy at the endoplasmic reticulum. Participates in the interaction of bcl2 with becn1 and is required for bcl2-mediated depression of endoplasmic reticulum Ca(2+) stores during autophagy. The sequence is that of CDGSH iron-sulfur domain-containing protein 2A (cisd2a) from Salmo salar (Atlantic salmon).